The following is a 322-amino-acid chain: MVNISTINWVFVCGLSFCLGGIAVLSLMPLGSDCVCPLSNPLAKLAGGGEGVSVIKKEPADEKQPQPHDHGASVHKMALLVPFRDRFEELLQFVPHMTAFLKRQGVAHHIFVLNQVDRFRFNRASLINVGFQFASDVYDYIAMHDVDLLPLNDNLLYEYPSSLGPLHIAGPKLHPKYHYDNFVGGILLVRREHFKQMNGMSNQYWGWGLEDDEFFVRIRDAGLQVTRPQNIKTGTNDTFSHIHNRYHRKRDTQKCFNQKEMTRKRDHKTGLDNVKYKILKVHEMLIDQVPVTILNILLDCDVNKTPWCDCSGTAAAASAVQT.

The Cytoplasmic segment spans residues 1-9; the sequence is MVNISTINW. The chain crosses the membrane as a helical; Signal-anchor for type II membrane protein span at residues 10-30; the sequence is VFVCGLSFCLGGIAVLSLMPL. The Lumenal segment spans residues 31–322; it reads GSDCVCPLSN…TAAAASAVQT (292 aa). Residues Pro-82, Arg-84, Asp-145, and Val-146 each coordinate UDP-alpha-D-galactose. Position 147 (Asp-147) interacts with Mn(2+). UDP-alpha-D-galactose is bound by residues Tyr-177, Gly-185, Trp-207, and Gly-208. Beta-D-xylose is bound at residue Leu-209. Glu-210 lines the UDP-alpha-D-galactose pocket. Beta-D-xylose contacts are provided by Asp-211 and Asp-212. Asn-236 carries N-linked (GlcNAc...) asparagine glycosylation. His-241, His-243, and Arg-250 together coordinate UDP-alpha-D-galactose. 2 residues coordinate Mn(2+): His-241 and His-243. Intrachain disulfides connect Cys-255–Cys-310 and Cys-300–Cys-308.

This sequence belongs to the glycosyltransferase 7 family. The cofactor is Mn(2+). In terms of tissue distribution, expressed in male and female adults. Expressed in head.

It localises to the golgi apparatus membrane. The catalysed reaction is 3-O-(beta-D-xylosyl)-L-seryl-[protein] + UDP-alpha-D-galactose = 3-O-(beta-D-galactosyl-(1-&gt;4)-beta-D-xylosyl)-L-seryl-[protein] + UDP + H(+). It functions in the pathway protein modification; protein glycosylation. Functionally, transfers galactose from UDP-D-Galactose (UDP-Gal) to the acceptor xylose residue in the linkage tetrasaccharide region of the glycosaminoglycan side chain of proteoglycans. No activity towards beta-GlcNAc, beta-Glc, beta-Gal, and beta-GalNAc as acceptors. The protein is Beta-1,4-galactosyltransferase 7 of Drosophila melanogaster (Fruit fly).